A 176-amino-acid chain; its full sequence is Ribosome maturation factor RimM (176 aa).

The region spanning 97–176 (EDEFYWRDLI…QIIVDWDPDF (80 aa)) is the PRC barrel domain.

Belongs to the RimM family. Binds ribosomal protein uS19.

The protein localises to the cytoplasm. Functionally, an accessory protein needed during the final step in the assembly of 30S ribosomal subunit, possibly for assembly of the head region. Essential for efficient processing of 16S rRNA. May be needed both before and after RbfA during the maturation of 16S rRNA. It has affinity for free ribosomal 30S subunits but not for 70S ribosomes. This chain is Ribosome maturation factor RimM, found in Shewanella amazonensis (strain ATCC BAA-1098 / SB2B).